A 127-amino-acid chain; its full sequence is Cyclin-dependent protein kinase inhibitor SIM (127 aa).

The segment at 21–71 (RANTNRDDDGGGCTTPTSSDHKIPPTTATTPPPPPQKPRPPSTPSSLGIRS) is disordered. A compositionally biased stretch (pro residues) spans 50–63 (TPPPPPQKPRPPST).

As to quaternary structure, interacts with CDKA-1. Interacts with CYCD2-1, CYCD3-2 and CYCD4-1. Interacts with CDKB1-1. Interacts with CPR5. Expressed in the shoot apical meristem, leaf primordia and the elongation zone of the root.

It localises to the nucleus. Its function is as follows. Cyclin-dependent protein kinase (CDK) inhibitor that functions as a repressor of mitosis in the endoreduplication cell cycle. Inhibits the kinase activity of CYCD3-1/CDKA-1, CYCD2-1/CDKA-1 and CYCB1-1/CDKB1-1 complexes in a dose dependent manner. Cooperates with SMR1 and SMR2 to promote endoreplication during leaf development. Required for normal trichome endoreplicating cell cycles. Positive regulator of effector-triggered immunity (ETI). This chain is Cyclin-dependent protein kinase inhibitor SIM, found in Arabidopsis thaliana (Mouse-ear cress).